The chain runs to 338 residues: CDP-paratose 2-epimerase (338 aa).

Thr-124 is a binding site for substrate. Catalysis depends on Tyr-164, which acts as the Proton acceptor.

It belongs to the NAD(P)-dependent epimerase/dehydratase family. As to quaternary structure, homotetramer. NAD(+) serves as cofactor.

The enzyme catalyses CDP-alpha-D-paratose = CDP-3,6-dideoxy-alpha-D-mannose. It participates in nucleotide-sugar biosynthesis; CDP-3,6-dideoxy-D-mannose biosynthesis; CDP-3,6-dideoxy-D-mannose from CTP and alpha-D-glucose 1-phosphate: step 5/5. Catalyzes the isomeration of CDP-paratose to CDP-tyvelose. The protein is CDP-paratose 2-epimerase (rfbE) of Salmonella typhi.